Consider the following 145-residue polypeptide: Protein SprT-like (145 aa).

In terms of domain architecture, SprT-like spans 5–141; it reads NYVKQVSVED…CGRCMGKLRL (137 aa). Position 64 (His64) interacts with Zn(2+). Glu65 is an active-site residue. His68 is a Zn(2+) binding site.

Belongs to the SprT family. Zn(2+) serves as cofactor.

It is found in the cytoplasm. In Streptococcus sanguinis (strain SK36), this protein is Protein SprT-like.